The following is a 397-amino-acid chain: MAEVRVDSLEFFKSHWTAWRYLGVAHFRVENWKNLYVFYSIVSNLLVTLCYPVHLGISLFRNRTITEDILNLTTFATCTACSVKCLLYAYNIKDVLEMERLLRLLDERVVGPEQRSIYGQVRVQLRNVLYVFIGIYMPCALFAELSFLFKEERGLMYPAWFPFDWLHSTRNYYIANAYQIVGISFQLLQNYVSDCFPAVVLCLISSHIKMLYNRFEEVGLDPARDAEKDLEACITDHKHILEWAGGSLVRVLFTFQLFSRLFRRIEAFISLPMLIQFTVTALNVCIGLAALVFFVSEPMARMYFIFYSLAMPLQIFPSCFFGTDNEYWFGRLHYAAFSCNWHTQNRSFKRKMMLFVEQSLKKSTAVAGGMMRIHLDTFFSTLKGAYSLFTIIIRMRK.

At 1-36 the chain is on the cytoplasmic side; sequence MAEVRVDSLEFFKSHWTAWRYLGVAHFRVENWKNLY. Residues 37–57 traverse the membrane as a helical segment; the sequence is VFYSIVSNLLVTLCYPVHLGI. Over 58-68 the chain is Extracellular; it reads SLFRNRTITED. N-linked (GlcNAc...) asparagine glycosylation is present at Asn-62. The helical transmembrane segment at 69-92 threads the bilayer; the sequence is ILNLTTFATCTACSVKCLLYAYNI. The Cytoplasmic segment spans residues 93–128; it reads KDVLEMERLLRLLDERVVGPEQRSIYGQVRVQLRNV. Residues 129–149 traverse the membrane as a helical segment; sequence LYVFIGIYMPCALFAELSFLF. The Extracellular portion of the chain corresponds to 150 to 179; sequence KEERGLMYPAWFPFDWLHSTRNYYIANAYQ. The helical transmembrane segment at 180 to 200 threads the bilayer; that stretch reads IVGISFQLLQNYVSDCFPAVV. The Cytoplasmic segment spans residues 201 to 274; it reads LCLISSHIKM…IEAFISLPML (74 aa). A helical transmembrane segment spans residues 275 to 295; the sequence is IQFTVTALNVCIGLAALVFFV. Over 296-301 the chain is Extracellular; the sequence is SEPMAR. A helical transmembrane segment spans residues 302–322; it reads MYFIFYSLAMPLQIFPSCFFG. The Cytoplasmic segment spans residues 323 to 372; it reads TDNEYWFGRLHYAAFSCNWHTQNRSFKRKMMLFVEQSLKKSTAVAGGMMR. A helical membrane pass occupies residues 373 to 393; it reads IHLDTFFSTLKGAYSLFTIII. Over 394 to 397 the chain is Extracellular; it reads RMRK.

Belongs to the insect chemoreceptor superfamily. Heteromeric odorant receptor channel (TC 1.A.69) family. Or2a subfamily. As to quaternary structure, interacts with Orco. Complexes exist early in the endomembrane system in olfactory sensory neurons (OSNs), coupling these complexes to the conserved ciliary trafficking pathway. Expressed in neurons of the third antennal segment.

The protein resides in the cell membrane. Functionally, odorant receptor which mediates acceptance or avoidance behavior, depending on its substrates. The odorant receptor repertoire encodes a large collection of odor stimuli that vary widely in identity, intensity, and duration. May form a complex with Orco to form odorant-sensing units, providing sensitive and prolonged odorant signaling and calcium permeability. Involved in the behavioral responses to ethyl acetate, anisole, hexanoic acid, and pyrazines. The polypeptide is Odorant receptor 59a (Or59a) (Drosophila melanogaster (Fruit fly)).